Here is a 111-residue protein sequence, read N- to C-terminus: MSLPRRAAHVAIRGYQLTLSGLVGRQCRHWPSCSAYTDEAIERHGLWAGGWMGLARICRCGPFGTHGIDLVPERLPEGAAWHRPWAYGRWRGVNAPATPLAEEVHDPLPGP.

It belongs to the UPF0161 family.

It localises to the cell inner membrane. In terms of biological role, could be involved in insertion of integral membrane proteins into the membrane. This Methylobacterium nodulans (strain LMG 21967 / CNCM I-2342 / ORS 2060) protein is Putative membrane protein insertion efficiency factor.